The following is a 92-amino-acid chain: Non-specific lipid-transfer protein B (92 aa).

Disulfide bonds link cysteine 3–cysteine 51, cysteine 13–cysteine 28, cysteine 29–cysteine 74, and cysteine 49–cysteine 88.

It belongs to the plant LTP family.

In terms of biological role, plant non-specific lipid-transfer proteins transfer phospholipids as well as galactolipids across membranes. May play a role in wax or cutin deposition in the cell walls of expanding epidermal cells and certain secretory tissues. The chain is Non-specific lipid-transfer protein B from Ricinus communis (Castor bean).